Reading from the N-terminus, the 234-residue chain is Orotidine 5'-phosphate decarboxylase (234 aa).

Substrate is bound by residues aspartate 10, lysine 32, 59 to 68 (DLKLHDIPTT), threonine 122, arginine 184, glutamine 193, glycine 213, and arginine 214. The active-site Proton donor is the lysine 61.

It belongs to the OMP decarboxylase family. Type 1 subfamily. Homodimer.

The enzyme catalyses orotidine 5'-phosphate + H(+) = UMP + CO2. It functions in the pathway pyrimidine metabolism; UMP biosynthesis via de novo pathway; UMP from orotate: step 2/2. Its function is as follows. Catalyzes the decarboxylation of orotidine 5'-monophosphate (OMP) to uridine 5'-monophosphate (UMP). The sequence is that of Orotidine 5'-phosphate decarboxylase from Bacillus pumilus (strain SAFR-032).